The primary structure comprises 80 residues: Probable antimicrobial peptide clone Con10 (80 aa).

The first 24 residues, 1-24 (MQYKTKTFLVIFLAYLVVTNEAEA), serve as a signal peptide directing secretion. A propeptide spanning residues 56–80 (EIEDFFDPYQRELDLELERLLSQLQ) is cleaved from the precursor.

Belongs to the non-disulfide-bridged peptide (NDBP) superfamily. Medium-length antimicrobial peptide (group 3) family. In terms of tissue distribution, expressed by the venom gland.

It localises to the secreted. It is found in the target cell membrane. Antimicrobial peptide. Has antifungal activity against all strains tested (MIC=12.5-200 uM). May act by disrupting the integrity of the bacterial cell membrane. This is Probable antimicrobial peptide clone Con10 from Opisthacanthus cayaporum (South American scorpion).